The sequence spans 266 residues: MRLIPLTRAAQVGKWAAAHIAKRINDFKPTAERPFVLGLPTGGTPLATYKALIELYQAGEVSFKHVVTFNMDEYIGIPADHPESYRSFMYNNFFNHIDIQEENINLLNGNTDNHEAECKRYEDKIKSYGKINLFMGGVGNDGHIAFNEPASSLSSRTRIKTLTEDTRIANSRFFDGDINQVPKYALTIGVGTLLDAEEVMILVTGHNKALALEAAVEGCVNHLWTVSALQLHPKAVIVCDEPSQQELKVKTVKYFSELEAENIKGF.

Residue Asp72 is the Proton acceptor; for enolization step of the active site. Asp141 functions as the For ring-opening step in the catalytic mechanism. Catalysis depends on His143, which acts as the Proton acceptor; for ring-opening step. The active-site For ring-opening step is Glu148.

The protein belongs to the glucosamine/galactosamine-6-phosphate isomerase family. NagB subfamily. Homohexamer; trimer of disulfide-linked dimers.

The catalysed reaction is alpha-D-glucosamine 6-phosphate + H2O = beta-D-fructose 6-phosphate + NH4(+). It participates in amino-sugar metabolism; N-acetylneuraminate degradation; D-fructose 6-phosphate from N-acetylneuraminate: step 5/5. Its activity is regulated as follows. Allosterically activated by N-acetylglucosamine 6-phosphate (GlcNAc6P). Its function is as follows. Catalyzes the reversible isomerization-deamination of glucosamine 6-phosphate (GlcN6P) to form fructose 6-phosphate (Fru6P) and ammonium ion. This chain is Glucosamine-6-phosphate deaminase, found in Vibrio parahaemolyticus serotype O3:K6 (strain RIMD 2210633).